A 693-amino-acid chain; its full sequence is Elongation factor G (693 aa).

One can recognise a tr-type G domain in the interval E8–L282. GTP is bound by residues A17–T24, D81–H85, and N135–D138.

The protein belongs to the TRAFAC class translation factor GTPase superfamily. Classic translation factor GTPase family. EF-G/EF-2 subfamily.

It is found in the cytoplasm. Its function is as follows. Catalyzes the GTP-dependent ribosomal translocation step during translation elongation. During this step, the ribosome changes from the pre-translocational (PRE) to the post-translocational (POST) state as the newly formed A-site-bound peptidyl-tRNA and P-site-bound deacylated tRNA move to the P and E sites, respectively. Catalyzes the coordinated movement of the two tRNA molecules, the mRNA and conformational changes in the ribosome. In Enterococcus faecalis (strain ATCC 700802 / V583), this protein is Elongation factor G.